Here is a 407-residue protein sequence, read N- to C-terminus: Leucine-rich repeat-containing protein 42 (407 aa).

LRR repeat units lie at residues 138 to 159, 163 to 184, 191 to 211, 223 to 243, and 247 to 268; these read VLKS…EEIR, SLEC…FKYI, SLVK…QRLT, NLQL…RYLT, and TLQK…KGFF. Residues 360–389 form a disordered region; the sequence is VQSSPSGETHSTHKSRKRRLSTEEEQSAAP.

The protein belongs to the LRRC42 family.

In Danio rerio (Zebrafish), this protein is Leucine-rich repeat-containing protein 42 (lrrc42).